A 394-amino-acid polypeptide reads, in one-letter code: Elongation factor Tu (394 aa).

In terms of domain architecture, tr-type G spans 10–204 (RTHINVGTIG…ILDNYIPEPK (195 aa)). A G1 region spans residues 19–26 (GHVDHGKT). Residue 19–26 (GHVDHGKT) coordinates GTP. Thr26 is a binding site for Mg(2+). Positions 60-64 (GITIN) are G2. A G3 region spans residues 81–84 (DCPG). Residues 81 to 85 (DCPGH) and 136 to 139 (NKCD) contribute to the GTP site. Residues 136–139 (NKCD) are G4. Residues 174 to 176 (SAL) form a G5 region.

This sequence belongs to the TRAFAC class translation factor GTPase superfamily. Classic translation factor GTPase family. EF-Tu/EF-1A subfamily. In terms of assembly, monomer.

It is found in the cytoplasm. The catalysed reaction is GTP + H2O = GDP + phosphate + H(+). In terms of biological role, GTP hydrolase that promotes the GTP-dependent binding of aminoacyl-tRNA to the A-site of ribosomes during protein biosynthesis. This Blochmanniella floridana protein is Elongation factor Tu.